We begin with the raw amino-acid sequence, 508 residues long: RanBP-type and C3HC4-type zinc finger-containing protein 1 (508 aa).

N-acetylmethionine is present on Met-1. Positions 1–218 (MDEKTKKAEE…PGCEMCCRAR (218 aa)) are interaction with IRF3. The interaction with TAB2 stretch occupies residues 1–268 (MDEKTKKAEE…NYLQHVQLEQ (268 aa)). Ser-50 carries the post-translational modification Phosphoserine. Positions 55-119 (IRLCVSVEDA…DQETLHSHGI (65 aa)) constitute a Ubiquitin-like domain. An interaction with RNF31 region spans residues 69-131 (VTIWLTVRPD…NGDGAYLYLL (63 aa)). The segment at 163–191 (QSRGPLEPVLPKPRTNQEPGQPDAAPESP) is disordered. The RanBP2-type zinc finger occupies 188 to 220 (PESPPVGWQCPGCTFINKPTRPGCEMCCRARPE). A coiled-coil region spans residues 231–259 (DEEERARLAGEEEALRQYQQRKQQQQEGN). The segment at 276–504 (EPTECPVCYS…VNGIPCHPSC (229 aa)) is TRIAD supradomain. Residues Cys-280, Cys-283, Cys-298, His-300, Cys-303, Cys-306, and Cys-321 each coordinate Zn(2+). The RING-type 1 zinc-finger motif lies at 280 to 330 (CPVCYSVLAPGEAVVLRECLHTFCRECLQGTIRNSQEAEVACPFIDSTYSC). A Phosphotyrosine modification is found at Tyr-328. Residues Cys-330, Cys-369, Cys-374, Cys-389, Cys-392, Cys-397, Cys-400, His-404, Cys-409, Cys-445, and Cys-448 each coordinate Zn(2+). Residues 349-409 (QRFLDLGVSI…CKAIHEHMNC (61 aa)) form an IBR-type zinc finger. The RING-type 2; atypical zinc finger occupies 445 to 474 (CPQCRIVVQKKDGCDWIRCTVCHTEICWVT). Residue Cys-458 is part of the active site. The Zn(2+) site is built by Cys-463 and Cys-466.

The protein belongs to the RBR family. As to quaternary structure, component of the LUBAC complex (linear ubiquitin chain assembly complex) which consists of SHARPIN, RBCK1 and RNF31. LUBAC has a MW of approximately 600 kDa suggesting a heteromultimeric assembly of its subunits. Interacts with beta-I-type (PRKCB1) and zeta-type protein kinase C (PRKCZ). Interacts with UBE2L3. Interacts with IREB2 only in iron-rich conditions. Associates with the TNF-R1 signaling complex (TNF-RSC) in a stimulation-dependent manner. Interacts with EYA1, TAB2, TAB3, MAP3K7 TRAF6 and RIPK1. Interacts with IRF3. Post-translationally, auto-ubiquitinated. Auto-ubiquitination leads to degradation by the proteasome. In terms of processing, phosphorylated. In vitro, phosphorylation inhibits auto-ubiquitination activity.

The enzyme catalyses [E2 ubiquitin-conjugating enzyme]-S-ubiquitinyl-L-cysteine + [acceptor protein]-L-lysine = [E2 ubiquitin-conjugating enzyme]-L-cysteine + [acceptor protein]-N(6)-ubiquitinyl-L-lysine.. It functions in the pathway protein modification; protein ubiquitination. Its function is as follows. E3 ubiquitin-protein ligase, which accepts ubiquitin from specific E2 ubiquitin-conjugating enzymes, such as UBE2L3/UBCM4, and then transfers it to substrates. Functions as an E3 ligase for oxidized IREB2 and both heme and oxygen are necessary for IREB2 ubiquitination. Promotes ubiquitination of TAB2 and IRF3 and their degradation by the proteasome. Component of the LUBAC complex which conjugates linear ('Met-1'-linked) polyubiquitin chains to substrates and plays a key role in NF-kappa-B activation and regulation of inflammation. LUBAC conjugates linear polyubiquitin to IKBKG and RIPK1 and is involved in activation of the canonical NF-kappa-B and the JNK signaling pathways. Linear ubiquitination mediated by the LUBAC complex interferes with TNF-induced cell death and thereby prevents inflammation. LUBAC is recruited to the TNF-R1 signaling complex (TNF-RSC) following polyubiquitination of TNF-RSC components by BIRC2 and/or BIRC3 and to conjugate linear polyubiquitin to IKBKG and possibly other components contributing to the stability of the complex. The LUBAC complex is also involved in innate immunity by conjugating linear polyubiquitin chains at the surface of bacteria invading the cytosol to form the ubiquitin coat surrounding bacteria. LUBAC is not able to initiate formation of the bacterial ubiquitin coat, and can only promote formation of linear polyubiquitins on pre-existing ubiquitin. The bacterial ubiquitin coat acts as an 'eat-me' signal for xenophagy and promotes NF-kappa-B activation. Together with OTULIN, the LUBAC complex regulates the canonical Wnt signaling during angiogenesis. Binds polyubiquitin of different linkage types. This Mus musculus (Mouse) protein is RanBP-type and C3HC4-type zinc finger-containing protein 1 (Rbck1).